Here is a 203-residue protein sequence, read N- to C-terminus: Tail fiber assembly protein homolog (203 aa).

Belongs to the tfa family.

The protein is Tail fiber assembly protein homolog (T) of Escherichia coli.